A 474-amino-acid polypeptide reads, in one-letter code: ABHD16B (474 aa).

The region spanning 175 to 293 (VICCEGNAGF…MPQSWKGLVV (119 aa)) is the AB hydrolase-1 domain. Catalysis depends on charge relay system residues Ser248, Asp323, and His423.

This sequence belongs to the AB hydrolase superfamily. ABHD16 family.

It carries out the reaction a 1,2-diacyl-sn-glycero-3-phospho-L-serine + H2O = a 2-acyl-sn-glycero-3-phospho-L-serine + a fatty acid + H(+). The enzyme catalyses a 1-acylglycerol + H2O = glycerol + a fatty acid + H(+). It catalyses the reaction 1-(9Z-octadecenoyl)-glycerol + H2O = glycerol + (9Z)-octadecenoate + H(+). Hydrolyzes the sn-1 position of glycerophospholipids with high specificity towards phosphatidylserine (PS), PS-PLA1 enzyme. Also hydrolyzes the acyl chain of glycerolipids with a preference for the monoacylglycerol (MAG) 1-acylglycerol, MAG lipase. Plays a regulatory role in cellular lipid homeostasis by modulating genes involved in neutral lipid degradation and in phospholipid synthesis and composition. The polypeptide is ABHD16B (Rattus norvegicus (Rat)).